A 607-amino-acid chain; its full sequence is Glutamine--fructose-6-phosphate aminotransferase [isomerizing] (607 aa).

The Nucleophile; for GATase activity role is filled by Cys-2. The Glutamine amidotransferase type-2 domain occupies 2-217; it reads CGIIGIIGRE…EGDWVVLTRE (216 aa). SIS domains are found at residues 283 to 422 and 455 to 597; these read PDFD…VKGQ and VATA…VDQP. The active-site For Fru-6P isomerization activity is the Lys-602.

As to quaternary structure, homodimer.

It localises to the cytoplasm. The enzyme catalyses D-fructose 6-phosphate + L-glutamine = D-glucosamine 6-phosphate + L-glutamate. In terms of biological role, catalyzes the first step in hexosamine metabolism, converting fructose-6P into glucosamine-6P using glutamine as a nitrogen source. The polypeptide is Glutamine--fructose-6-phosphate aminotransferase [isomerizing] (Zymomonas mobilis subsp. mobilis (strain ATCC 31821 / ZM4 / CP4)).